Reading from the N-terminus, the 381-residue chain is MIDTLRPVPFASEMAISKTVAWLNEQLELGNEQLLLMDCRPQELYESSHIESAINVAIPGIMLRRLQKGNLPVRALFTRCEDRDRFTRRCGTDTVVLYDENSSDWNENTGGESVLGLLLKKLKDEGCRAFYLEGGFSKFQAEFALHCETNLDGSCSSSSPPLPVLGLGGLRISSDSSSDIESDLDRDPNSATDSDGSPLSNSQPSFPVEILPFLYLGCAKDSTNLDVLEEFGIKYILNVTPNLPNLFENAGEFKYKQIPISDHWSQNLSQFFPEAISFIDEARGKNCGVLVHCLAGISRSVTVTVAYLMQKLNLSMNDAYDIVKMKKSNISPNFNFMGQLLDFERTLGLSSPCDNRVPAQQLYFTAPSNQNVYQVDSLQST.

The region spanning 30-148 (GNEQLLLMDC…FQAEFALHCE (119 aa)) is the Rhodanese domain. Residues 176 to 203 (SSSDIESDLDRDPNSATDSDGSPLSNSQ) are disordered. Polar residues predominate over residues 189–203 (NSATDSDGSPLSNSQ). Residues 206–349 (FPVEILPFLY…LLDFERTLGL (144 aa)) form the Tyrosine-protein phosphatase domain. Residue Cys-293 is the Phosphocysteine intermediate of the active site.

Belongs to the protein-tyrosine phosphatase family. Non-receptor class dual specificity subfamily. In terms of assembly, interacts with MAPK1/ERK2. Post-translationally, ubiquitinated by the SCF(FBXO31) complex, leading to its proteasomal degradation. Expressed in lung, heart, brain, and kidney, but not significantly in skeletal muscle or testis.

Its subcellular location is the cytoplasm. The enzyme catalyses O-phospho-L-tyrosyl-[protein] + H2O = L-tyrosyl-[protein] + phosphate. The catalysed reaction is O-phospho-L-seryl-[protein] + H2O = L-seryl-[protein] + phosphate. It catalyses the reaction O-phospho-L-threonyl-[protein] + H2O = L-threonyl-[protein] + phosphate. Dual specificity protein phosphatase, which mediates dephosphorylation and inactivation of MAP kinases. Has a specificity for the ERK family. Implicated in muscle and neuronal differentiation. Plays an important role in alleviating chronic postoperative pain. Necessary for the normal dephosphorylation of the long-lasting phosphorylated forms of spinal MAPK1/3 and MAP kinase p38 induced by peripheral surgery, which drives the resolution of acute postoperative allodynia. Also important for dephosphorylation of MAPK1/3 in local wound tissue, which further contributes to resolution of acute pain. This Rattus norvegicus (Rat) protein is Dual specificity protein phosphatase 6 (Dusp6).